A 579-amino-acid chain; its full sequence is uncharacterized protein (579 aa).

It belongs to the UbiD family.

This is an uncharacterized protein from Chlamydia trachomatis serovar D (strain ATCC VR-885 / DSM 19411 / UW-3/Cx).